The primary structure comprises 429 residues: Histidinol dehydrogenase (429 aa).

NAD(+)-binding residues include Tyr130, Gln191, and Asn214. Ser237, Gln259, and His262 together coordinate substrate. Residues Gln259 and His262 each contribute to the Zn(2+) site. Residues Glu327 and His328 each act as proton acceptor in the active site. 4 residues coordinate substrate: His328, Asp361, Glu415, and His420. Asp361 is a Zn(2+) binding site. His420 is a binding site for Zn(2+).

Belongs to the histidinol dehydrogenase family. Zn(2+) serves as cofactor.

The enzyme catalyses L-histidinol + 2 NAD(+) + H2O = L-histidine + 2 NADH + 3 H(+). It functions in the pathway amino-acid biosynthesis; L-histidine biosynthesis; L-histidine from 5-phospho-alpha-D-ribose 1-diphosphate: step 9/9. Catalyzes the sequential NAD-dependent oxidations of L-histidinol to L-histidinaldehyde and then to L-histidine. The protein is Histidinol dehydrogenase of Geobacter sulfurreducens (strain ATCC 51573 / DSM 12127 / PCA).